A 360-amino-acid polypeptide reads, in one-letter code: Protein Wnt-2 (360 aa).

Positions 1–25 (MNAPLGGIWLWLPLLLTWLTPEVNS) are cleaved as a signal peptide. 11 disulfide bridges follow: cysteine 76–cysteine 87, cysteine 127–cysteine 135, cysteine 137–cysteine 157, cysteine 206–cysteine 220, cysteine 208–cysteine 215, cysteine 278–cysteine 309, cysteine 294–cysteine 304, cysteine 308–cysteine 348, cysteine 324–cysteine 339, cysteine 326–cysteine 336, and cysteine 331–cysteine 332. Serine 212 is lipidated: O-palmitoleoyl serine; by PORCN. A glycan (N-linked (GlcNAc...) asparagine) is linked at asparagine 295.

This sequence belongs to the Wnt family. Post-translationally, palmitoleoylation is required for efficient binding to frizzled receptors. Depalmitoleoylation leads to Wnt signaling pathway inhibition.

It is found in the secreted. The protein resides in the extracellular space. It localises to the extracellular matrix. In terms of biological role, ligand for members of the frizzled family of seven transmembrane receptors. Functions in the canonical Wnt signaling pathway that results in activation of transcription factors of the TCF/LEF family. Functions as a upstream regulator of FGF10 expression. Plays an important role in embryonic lung development. May contribute to embryonic brain development by regulating the proliferation of dopaminergic precursors and neurons. The sequence is that of Protein Wnt-2 (WNT2) from Nomascus leucogenys (Northern white-cheeked gibbon).